The following is a 203-amino-acid chain: Holliday junction branch migration complex subunit RuvA (203 aa).

Residues 1–63 are domain I; sequence MIFSVRGEVL…EDSMTLYGFS (63 aa). The interval 64-141 is domain II; sequence DAENRDLFLA…GPVGASGLTV (78 aa). A flexible linker region spans residues 141 to 145; sequence VGTAA. Residues 146–203 form a domain III region; that stretch reads DGNAVRGSVVEALVGLGFAAKQAEEATDQVLDGELGKDGAVATSSALRAALSLLGKTR.

Belongs to the RuvA family. As to quaternary structure, homotetramer. Forms an RuvA(8)-RuvB(12)-Holliday junction (HJ) complex. HJ DNA is sandwiched between 2 RuvA tetramers; dsDNA enters through RuvA and exits via RuvB. An RuvB hexamer assembles on each DNA strand where it exits the tetramer. Each RuvB hexamer is contacted by two RuvA subunits (via domain III) on 2 adjacent RuvB subunits; this complex drives branch migration. In the full resolvosome a probable DNA-RuvA(4)-RuvB(12)-RuvC(2) complex forms which resolves the HJ.

The protein localises to the cytoplasm. In terms of biological role, the RuvA-RuvB-RuvC complex processes Holliday junction (HJ) DNA during genetic recombination and DNA repair, while the RuvA-RuvB complex plays an important role in the rescue of blocked DNA replication forks via replication fork reversal (RFR). RuvA specifically binds to HJ cruciform DNA, conferring on it an open structure. The RuvB hexamer acts as an ATP-dependent pump, pulling dsDNA into and through the RuvAB complex. HJ branch migration allows RuvC to scan DNA until it finds its consensus sequence, where it cleaves and resolves the cruciform DNA. The chain is Holliday junction branch migration complex subunit RuvA from Mycobacterium leprae (strain Br4923).